The chain runs to 182 residues: Sec-independent protein translocase protein TatB (182 aa).

The chain crosses the membrane as a helical span at residues 1-21 (MFDIGFSELLLVFVIGLIVLG). Disordered stretches follow at residues 88–107 (AAES…ASDE) and 121–182 (TQHE…SDKP). The segment covering 168–182 (AAPVVESSPSSSDKP) has biased composition (low complexity).

Belongs to the TatB family. As to quaternary structure, the Tat system comprises two distinct complexes: a TatABC complex, containing multiple copies of TatA, TatB and TatC subunits, and a separate TatA complex, containing only TatA subunits. Substrates initially bind to the TatABC complex, which probably triggers association of the separate TatA complex to form the active translocon.

The protein resides in the cell inner membrane. Its function is as follows. Part of the twin-arginine translocation (Tat) system that transports large folded proteins containing a characteristic twin-arginine motif in their signal peptide across membranes. Together with TatC, TatB is part of a receptor directly interacting with Tat signal peptides. TatB may form an oligomeric binding site that transiently accommodates folded Tat precursor proteins before their translocation. The chain is Sec-independent protein translocase protein TatB from Salmonella typhi.